Consider the following 516-residue polypeptide: MTDIHNHKILILDFGSQYTQLIARRVRELGVFCEIFPHDVAADFIKNYQAKGIILSGGPESVYDSDVKAPEIVFELGVPVLGICYGMQTMVMQHGGEVKGADQSEFGKAIINILNSTNNIFSNMEHEQLVWMSHSDKVTQTGEHFEIIASSTNAPVAAVAHKNKPFFGVQFHPETTHTENGKQIIENFVVNICGCDTLWNIENIIENDIKEIKQKVGTDKVILGLSGGVDSSVVAAILHQAIGDQLTCIFVDTGLLRLNEGDQVMQVFAEHMDINVIRINAKNRFLDALRGICDPEQKRKIIGKLFVDIFDEEAAKIENAKWLAQGTIYSDVIESAGNNQSKAHVIKSHHNVGGLPKEMKLKLLEPLRELFKDEVRKLGLGLGLPYNMLYRHPFPGPGLGVRILGEIKKEYVETLQKADAIFTEELYKHNLYHDVSQAFGVFLPVKSVGVVGDQRRYEYVIALRAVVSIDFMTATWANLPYDFLSLVSNRIVNEVKQVSRVVYDVTGKPPGTIEWE.

Residues 8 to 198 (KILILDFGSQ…VVNICGCDTL (191 aa)) form the Glutamine amidotransferase type-1 domain. The Nucleophile role is filled by cysteine 84. Residues histidine 172 and glutamate 174 contribute to the active site. Residues 199-391 (WNIENIIEND…LGLPYNMLYR (193 aa)) enclose the GMPS ATP-PPase domain. Residue 226–232 (SGGVDSS) coordinates ATP.

In terms of assembly, homodimer.

The catalysed reaction is XMP + L-glutamine + ATP + H2O = GMP + L-glutamate + AMP + diphosphate + 2 H(+). The protein operates within purine metabolism; GMP biosynthesis; GMP from XMP (L-Gln route): step 1/1. Catalyzes the synthesis of GMP from XMP. In Francisella tularensis subsp. tularensis (strain WY96-3418), this protein is GMP synthase [glutamine-hydrolyzing].